The sequence spans 551 residues: MDQPSPSAEDSQPERQSTGTRGTRFWAVFVSLCFASFVASLDITAITTALPTVTRELDGGENYVWIANSYTLASAVVQPLIGQISNIVGRRNPMIILMCLFALGSGICGGATSTGMMIAGRTVQGLGAGGILLLLEVIVCDLVPLRERAQYVGIALSTCALGISLGPLVGGALVQHATWRWVFYINLPCAGVALVALVLCLNVQHKREVSWGRALARVDWVGNTIFIAAICAIMYALVIGGSVHPWSSYQVLVPLVLGAFGWVLFHIFEASPYCLEPTMPPRLFRNRTSMTAYVLAFLAAMLMQWVVYFLTLFFQTVKGQSTTMSGVDVIPFTGFMIPSAIVGGAIMSKTGVYRPLHWAGFALLSICMGVFSTWDAGTPRAEWVILQCLVGLGHGLLLTSVLPAIQAALPESDNAAATSAYAFLRSFGFVWGVEIPAVVFNGQVDRFISRVHDATVRNKLAHGGAYSLAGTSFLSQLGDEADAVRSTYTDSLRTVWQVGMAFALLGFALVVVEKHIELRTTLETDFGLEGSENRAATSVEGVETGPVSKAQ.

The next 8 helical transmembrane spans lie at 26-46 (WAVFVSLCFASFVASLDITAI), 64-84 (VWIANSYTLASAVVQPLIGQI), 93-113 (PMIILMCLFALGSGICGGATS), 125-145 (GLGAGGILLLLEVIVCDLVPL), 154-174 (IALSTCALGISLGPLVGGALV), 181-201 (WVFYINLPCAGVALVALVLCL), 220-240 (WVGNTIFIAAICAIMYALVIG), and 251-271 (VLVPLVLGAFGWVLFHIFEAS). An N-linked (GlcNAc...) asparagine glycan is attached at Asn286. Helical transmembrane passes span 294-314 (VLAFLAAMLMQWVVYFLTLFF), 327-347 (VDVIPFTGFMIPSAIVGGAIM), 356-376 (LHWAGFALLSICMGVFSTWDA), 385-405 (ILQCLVGLGHGLLLTSVLPAI), 420-440 (AYAFLRSFGFVWGVEIPAVVF), and 492-512 (LRTVWQVGMAFALLGFALVVV).

The protein belongs to the major facilitator superfamily.

The protein resides in the membrane. MFS efflux transporter; part of the gene cluster that mediates the biosynthesis of aspirochlorine (or antibiotic A30641), an unusual halogenated spiro compound with distinctive antifungal properties due to selective inhibition of protein biosynthesis, and which is also active against bacteria, viruses, and murine tumor cells. The chain is MFS efflux transporter aclA from Aspergillus oryzae (strain ATCC 42149 / RIB 40) (Yellow koji mold).